A 718-amino-acid polypeptide reads, in one-letter code: Homeobox-leucine zipper protein HDG9 (718 aa).

Basic and acidic residues predominate over residues 1–12; it reads MDFTRDDNSSDE. Residues 1–35 form a disordered region; the sequence is MDFTRDDNSSDERENDVDANTNNRHEKKGYHRHTN. A DNA-binding region (homeobox) is located at residues 26–85; that stretch reads EKKGYHRHTNEQIHRLETYFKECPHPDEFQRRLLGEELNLKPKQIKFWFQNKRTQAKSHN. A coiled-coil region spans residues 78-152; it reads RTQAKSHNEK…LKDEYERVSN (75 aa). Residues 169 to 209 are disordered; the sequence is PYLHGPSNHASTSKNRPALYGTSSNRLPEPSSIFRGPYTRG. Over residues 176–194 the composition is skewed to polar residues; the sequence is NHASTSKNRPALYGTSSNR. In terms of domain architecture, START spans 232-464; that stretch reads SQLEKIAMLE…LERTCERLIF (233 aa).

It belongs to the HD-ZIP homeobox family. Class IV subfamily. As to expression, expressed in anthers with highest levels in the tapetum and pollen grains, and chalazal end of the embryo sac.

It is found in the nucleus. Functionally, probable transcription factor that binds to the DNA sequence 5'-GCATTAAATGCGCA-3'. The sequence is that of Homeobox-leucine zipper protein HDG9 (HDG9) from Arabidopsis thaliana (Mouse-ear cress).